The primary structure comprises 393 residues: Phosphoglycerate kinase (393 aa).

Residues 21–23 (DMN), Arg36, 59–62 (HLGR), Arg114, and Arg147 each bind substrate. ATP-binding positions include Lys198, Glu320, and 346-349 (GGDT).

The protein belongs to the phosphoglycerate kinase family. As to quaternary structure, monomer.

The protein resides in the cytoplasm. The catalysed reaction is (2R)-3-phosphoglycerate + ATP = (2R)-3-phospho-glyceroyl phosphate + ADP. Its pathway is carbohydrate degradation; glycolysis; pyruvate from D-glyceraldehyde 3-phosphate: step 2/5. The polypeptide is Phosphoglycerate kinase (Thiobacillus denitrificans (strain ATCC 25259 / T1)).